The chain runs to 422 residues: Adenylosuccinate synthetase (422 aa).

GTP is bound by residues 11 to 17 (GDEGKGK) and 39 to 41 (GHT). Aspartate 12 (proton acceptor) is an active-site residue. Residues aspartate 12 and glycine 39 each contribute to the Mg(2+) site. IMP is bound by residues 12–15 (DEGK), 37–40 (NAGH), threonine 129, arginine 143, asparagine 219, threonine 234, and arginine 298. The active-site Proton donor is histidine 40. A substrate-binding site is contributed by 294–300 (VTTGRRR). Residues arginine 300, 326 to 328 (KLD), and 409 to 411 (GTG) each bind GTP.

It belongs to the adenylosuccinate synthetase family. Homodimer. Mg(2+) serves as cofactor.

It localises to the cytoplasm. It catalyses the reaction IMP + L-aspartate + GTP = N(6)-(1,2-dicarboxyethyl)-AMP + GDP + phosphate + 2 H(+). Its pathway is purine metabolism; AMP biosynthesis via de novo pathway; AMP from IMP: step 1/2. Its function is as follows. Plays an important role in the de novo pathway and in the salvage pathway of purine nucleotide biosynthesis. Catalyzes the first committed step in the biosynthesis of AMP from IMP. This Blastomyces gilchristii (strain SLH14081) (Blastomyces dermatitidis) protein is Adenylosuccinate synthetase.